The sequence spans 145 residues: D-aminoacyl-tRNA deacylase (145 aa).

Positions 137–138 (GP) match the Gly-cisPro motif, important for rejection of L-amino acids motif.

This sequence belongs to the DTD family. Homodimer.

The protein resides in the cytoplasm. It carries out the reaction glycyl-tRNA(Ala) + H2O = tRNA(Ala) + glycine + H(+). It catalyses the reaction a D-aminoacyl-tRNA + H2O = a tRNA + a D-alpha-amino acid + H(+). An aminoacyl-tRNA editing enzyme that deacylates mischarged D-aminoacyl-tRNAs. Also deacylates mischarged glycyl-tRNA(Ala), protecting cells against glycine mischarging by AlaRS. Acts via tRNA-based rather than protein-based catalysis; rejects L-amino acids rather than detecting D-amino acids in the active site. By recycling D-aminoacyl-tRNA to D-amino acids and free tRNA molecules, this enzyme counteracts the toxicity associated with the formation of D-aminoacyl-tRNA entities in vivo and helps enforce protein L-homochirality. The polypeptide is D-aminoacyl-tRNA deacylase (Methylacidiphilum infernorum (isolate V4) (Methylokorus infernorum (strain V4))).